The following is a 303-amino-acid chain: Probable cell division protein WhiA (303 aa).

A DNA-binding region (H-T-H motif) is located at residues 272–303 (SIQQLADSLSKPLTKSGVNHRLRKINKIADEL).

The protein belongs to the WhiA family.

Functionally, involved in cell division and chromosome segregation. The sequence is that of Probable cell division protein WhiA from Streptococcus gordonii (strain Challis / ATCC 35105 / BCRC 15272 / CH1 / DL1 / V288).